A 351-amino-acid polypeptide reads, in one-letter code: Rab9 effector protein with kelch motifs (351 aa).

Kelch repeat units lie at residues 54–102 (KIVI…PESE), 105–156 (SLWV…TNSA), 162–210 (LFVF…VITA), 214–263 (DIYI…TFNK), 264–313 (NIFI…LLPW), and 328–351 (LCFV…TVLT).

In terms of biological role, rab9 effector required for endosome to trans-Golgi network (TGN) transport. In Danio rerio (Zebrafish), this protein is Rab9 effector protein with kelch motifs (rabepk).